Consider the following 618-residue polypeptide: DNA mismatch repair protein MutL (618 aa).

It belongs to the DNA mismatch repair MutL/HexB family.

This protein is involved in the repair of mismatches in DNA. It is required for dam-dependent methyl-directed DNA mismatch repair. May act as a 'molecular matchmaker', a protein that promotes the formation of a stable complex between two or more DNA-binding proteins in an ATP-dependent manner without itself being part of a final effector complex. This chain is DNA mismatch repair protein MutL, found in Porphyromonas gingivalis (strain ATCC 33277 / DSM 20709 / CIP 103683 / JCM 12257 / NCTC 11834 / 2561).